An 86-amino-acid chain; its full sequence is Anti-adapter protein IraP (86 aa).

Positions 1-42 (MKNLIAELLVKLAQKEEESKELVAQVEALEIVVTALLRQMAQ) form a coiled coil.

The protein belongs to the IraP family. In terms of assembly, interacts with RssB.

It is found in the cytoplasm. Functionally, inhibits RpoS proteolysis by regulating RssB activity, thereby increasing the stability of the sigma stress factor RpoS especially during phosphate starvation, but also in stationary phase and during nitrogen starvation. Its effect on RpoS stability is due to its interaction with RssB, which probably blocks the interaction of RssB with RpoS, and the consequent delivery of the RssB-RpoS complex to the ClpXP protein degradation pathway. In Enterobacter sp. (strain 638), this protein is Anti-adapter protein IraP.